Reading from the N-terminus, the 513-residue chain is Nitrate transporter 2.2 (513 aa).

Transmembrane regions (helical) follow at residues 38 to 58, 74 to 94, 98 to 118, 128 to 148, 158 to 178, 196 to 216, 247 to 265, 281 to 301, 323 to 343, 351 to 371, 383 to 403, and 419 to 439; these read WICF…APVI, VSAV…VDVV, YGAA…ALVT, FFIG…GTMF, AIAA…MPLI, AFFV…LLGI, LGNY…SFGV, FGLN…MNIF, LWVL…MGKV, IVIM…HFGI, VSGL…AIWF, and FVWM…IWFP.

Belongs to the major facilitator superfamily. Nitrate/nitrite porter (TC 2.A.1.8) family.

It is found in the cell membrane. Functionally, involved in nitrate transport, but does not seem to be able to mediate transport by its own. Acts as a dual component transporter with NAR2 (system 2). Involved in a high affinity transport specific for nitrate. This is Nitrate transporter 2.2 from Chlamydomonas reinhardtii (Chlamydomonas smithii).